We begin with the raw amino-acid sequence, 178 residues long: Ribosome maturation factor RimM (178 aa).

A PRC barrel domain is found at 101–178 (ADEYYWYQLV…VMRVEWDADF (78 aa)).

The protein belongs to the RimM family. In terms of assembly, binds ribosomal protein uS19.

It localises to the cytoplasm. Its function is as follows. An accessory protein needed during the final step in the assembly of 30S ribosomal subunit, possibly for assembly of the head region. Essential for efficient processing of 16S rRNA. May be needed both before and after RbfA during the maturation of 16S rRNA. It has affinity for free ribosomal 30S subunits but not for 70S ribosomes. The chain is Ribosome maturation factor RimM from Pseudomonas putida (strain ATCC 47054 / DSM 6125 / CFBP 8728 / NCIMB 11950 / KT2440).